Here is a 503-residue protein sequence, read N- to C-terminus: MEEFQGYFELDRSRQDDFLYPLIFREYIYALAHDHGLNRSILFENAGYYNKSSSIIVKRLITRIYQQNPLIFSANDSIQNQFFGHNKNLYSQIISEGFAVIVEIPFSLRLVSSLERKQXAKSHNLRSIHXIFPFLEDKFSHLDYVSAVLIPYHIHLEIVVQTLRYWVKDASSLHLLRFFLHEYWNSLITPKKHITIFSKGNPRLFLFLYNXHICEYESIFLFLRNQSSHLRSTSSGIFFERIHFYVKIEDFVKVLFENDFQCILWFFKDPFMHYVRYQGKLILASKDTPLLMNKWKYYLVNLWQYHFYAWFQPGRIDINQLCKYSLDFLGYRLSVRLNSSVVRSQMLENSFLINNTMKKFETIVPIIPLIGSLSKANFCNTLGHPISKPTRADSSDSDIIDRFLRICRNLSHYHSGSSKKKSLYRVKYILRLSCVKTLARKHKRTVRTFLKRLGSEFLEEFLTEEEVVLSLIFHRTYSTSRRLYRGQIWYLDITSINDLVNYE.

It belongs to the intron maturase 2 family. MatK subfamily.

Its subcellular location is the plastid. It localises to the chloroplast. Functionally, usually encoded in the trnK tRNA gene intron. Probably assists in splicing its own and other chloroplast group II introns. The sequence is that of Maturase K from Callistemon polandii (Gold-tipped bottlebrush).